The sequence spans 534 residues: Cysteine/serine-rich nuclear protein 2 (534 aa).

Position 1 is an N-acetylmethionine (Met1). Disordered regions lie at residues 1–52 and 480–534; these read MDAF…FTPT and DCGL…PLAV. Residues 31-40 show a composition bias toward low complexity; sequence SSDSADSCDS. A compositionally biased stretch (polar residues) spans 42 to 52; sequence NPPTTASFTPT. Over residues 480 to 492 the composition is skewed to basic and acidic residues; it reads DCGLKEPESEDLH.

It belongs to the AXUD1 family. Highest expression detected in thymus, brain and ovary. Low levels detected in naive T-cells.

Its subcellular location is the nucleus. Functionally, binds to the consensus sequence 5'-AGAGTG-3' and has transcriptional activator activity. May play a role in apoptosis. The sequence is that of Cysteine/serine-rich nuclear protein 2 (Csrnp2) from Mus musculus (Mouse).